Consider the following 265-residue polypeptide: Protein synthesis inhibitor PD-S2 (265 aa).

Disulfide bonds link cysteine 34-cysteine 262 and cysteine 88-cysteine 110. Asparagine 120 carries an N-linked (GlcNAc...) asparagine glycan.

Belongs to the ribosome-inactivating protein family. Type 1 RIP subfamily. Post-translationally, glycosylated. As to expression, seeds.

The enzyme catalyses Endohydrolysis of the N-glycosidic bond at one specific adenosine on the 28S rRNA.. Functionally, inhibits protein synthesis in animal cells. Useful as immunotoxin for pharmacological applications. This Phytolacca dioica (Bella sombra tree) protein is Protein synthesis inhibitor PD-S2.